The sequence spans 361 residues: Transcription factor TCP10 (361 aa).

The TCP domain occupies 29–87 (RKDRHSKVFTSKGPRDRRVRLSAHTAIQFYDVQDRLGYDRPSKAVDWLIKKAKTAIDKL). Disordered regions lie at residues 220–259 (DLTMTSSSSSEHQQQEQEERSNGGFMVNHHPHHHHHQPSM) and 295–317 (SWDHHQTTSDHHHHQNQASSMFA). The span at 295 to 304 (SWDHHQTTSD) shows a compositional bias: basic and acidic residues.

In terms of assembly, interacts with AHP1, AHP2 and AHP3. Interacts with SPL. Mostly detected in lateral organs, such as leaves and flowers. Expressed in cotyledons, particularly in the vascular region, in leaves, roots, stems, buds, flowers and immature siliques.

Its subcellular location is the nucleus. In terms of biological role, plays a pivotal role in the control of morphogenesis of shoot organs by negatively regulating the expression of boundary-specific genes such as CUC genes, probably through the induction of miRNA (e.g. miR164). Participates in ovule development. This is Transcription factor TCP10 (TCP10) from Arabidopsis thaliana (Mouse-ear cress).